We begin with the raw amino-acid sequence, 183 residues long: Adenylate kinase (183 aa).

7 to 15 lines the ATP pocket; sequence GVAGVGKTT.

It belongs to the archaeal adenylate kinase family.

It localises to the cytoplasm. It catalyses the reaction AMP + ATP = 2 ADP. This Thermoplasma acidophilum (strain ATCC 25905 / DSM 1728 / JCM 9062 / NBRC 15155 / AMRC-C165) protein is Adenylate kinase (adkA).